We begin with the raw amino-acid sequence, 453 residues long: Homogentisate 1,2-dioxygenase (453 aa).

Residues 1–12 (MLEKAERQRKAA) are compositionally biased toward basic and acidic residues. The tract at residues 1–43 (MLEKAERQRKAAPDQQRSAGYMPGFGNDFETESLPGSLPQGQN) is disordered. The active-site Proton acceptor is the histidine 306. Histidine 349 and glutamate 355 together coordinate Fe cation. Residues tyrosine 364 and histidine 385 each coordinate homogentisate. Histidine 385 serves as a coordination point for Fe cation.

The protein belongs to the homogentisate dioxygenase family. In terms of assembly, hexamer; dimer of trimers. Requires Fe cation as cofactor.

It catalyses the reaction homogentisate + O2 = 4-maleylacetoacetate + H(+). The protein operates within amino-acid degradation; L-phenylalanine degradation; acetoacetate and fumarate from L-phenylalanine: step 4/6. Involved in the catabolism of homogentisate (2,5-dihydroxyphenylacetate or 2,5-OH-PhAc), a central intermediate in the degradation of phenylalanine and tyrosine. Catalyzes the oxidative ring cleavage of the aromatic ring of homogentisate to yield maleylacetoacetate. The sequence is that of Homogentisate 1,2-dioxygenase from Sinorhizobium medicae (strain WSM419) (Ensifer medicae).